A 37-amino-acid polypeptide reads, in one-letter code: Large ribosomal subunit protein bL36c (37 aa).

This sequence belongs to the bacterial ribosomal protein bL36 family.

The protein localises to the plastid. Its subcellular location is the chloroplast. The polypeptide is Large ribosomal subunit protein bL36c (Lolium perenne (Perennial ryegrass)).